We begin with the raw amino-acid sequence, 254 residues long: Triosephosphate isomerase, cytosolic (254 aa).

2 residues coordinate substrate: Asn-10 and Lys-12. Residue His-96 is the Electrophile of the active site. The active-site Proton acceptor is Glu-166.

It belongs to the triosephosphate isomerase family. In terms of assembly, homodimer.

The protein resides in the cytoplasm. It catalyses the reaction D-glyceraldehyde 3-phosphate = dihydroxyacetone phosphate. It participates in carbohydrate biosynthesis; gluconeogenesis. Its pathway is carbohydrate degradation; glycolysis; D-glyceraldehyde 3-phosphate from glycerone phosphate: step 1/1. This Petunia hybrida (Petunia) protein is Triosephosphate isomerase, cytosolic (TPIP1).